The following is an 80-amino-acid chain: ATP synthase subunit c (80 aa).

A run of 2 helical transmembrane segments spans residues 11 to 31 (MAAAVMMGLAAIGAAIGIGIL) and 53 to 73 (FFVVMGLVDAIPMIAVGLGLY).

Belongs to the ATPase C chain family. F-type ATPases have 2 components, F(1) - the catalytic core - and F(0) - the membrane proton channel. F(1) has five subunits: alpha(3), beta(3), gamma(1), delta(1), epsilon(1). F(0) has three main subunits: a(1), b(2) and c(10-14). The alpha and beta chains form an alternating ring which encloses part of the gamma chain. F(1) is attached to F(0) by a central stalk formed by the gamma and epsilon chains, while a peripheral stalk is formed by the delta and b chains.

Its subcellular location is the cell inner membrane. F(1)F(0) ATP synthase produces ATP from ADP in the presence of a proton or sodium gradient. F-type ATPases consist of two structural domains, F(1) containing the extramembraneous catalytic core and F(0) containing the membrane proton channel, linked together by a central stalk and a peripheral stalk. During catalysis, ATP synthesis in the catalytic domain of F(1) is coupled via a rotary mechanism of the central stalk subunits to proton translocation. Functionally, key component of the F(0) channel; it plays a direct role in translocation across the membrane. A homomeric c-ring of between 10-14 subunits forms the central stalk rotor element with the F(1) delta and epsilon subunits. The sequence is that of ATP synthase subunit c from Erwinia tasmaniensis (strain DSM 17950 / CFBP 7177 / CIP 109463 / NCPPB 4357 / Et1/99).